The chain runs to 287 residues: Mu-like prophage FluMu DNA transposition protein B (287 aa).

The region spanning 7 to 62 (LKQHLSDSQITQAQLAREAGVNAGALSAYLNDNYKGNIADVEAKLAAYLEKKAVQA) is the HTH cro/C1-type domain. The segment at residues 18–37 (QAQLAREAGVNAGALSAYLN) is a DNA-binding region (H-T-H motif). 98 to 105 (GMSGVGKT) contacts ATP.

Its function is as follows. This protein is a non-specific DNA-binding and ATP-hydrolyzing protein essential for bacteriophage integration and replication. The protein is Mu-like prophage FluMu DNA transposition protein B of Haemophilus influenzae (strain ATCC 51907 / DSM 11121 / KW20 / Rd).